Consider the following 308-residue polypeptide: UPF0026 protein jhp_0109 (308 aa).

One can recognise a Radical SAM core domain in the interval F18–Q247. 3 residues coordinate [4Fe-4S] cluster: C33, C37, and C40.

Belongs to the UPF0026 family. [4Fe-4S] cluster is required as a cofactor.

The polypeptide is UPF0026 protein jhp_0109 (Helicobacter pylori (strain J99 / ATCC 700824) (Campylobacter pylori J99)).